A 388-amino-acid chain; its full sequence is 1-deoxy-D-xylulose 5-phosphate reductoisomerase (388 aa).

Residues Thr10, Gly11, Ser12, Ile13, Lys37, Asn38, and Asn123 each contribute to the NADPH site. Position 124 (Lys124) interacts with 1-deoxy-D-xylulose 5-phosphate. Glu125 is an NADPH binding site. Asp149 lines the Mn(2+) pocket. Positions 150, 151, 175, and 198 each coordinate 1-deoxy-D-xylulose 5-phosphate. Residue Glu151 participates in Mn(2+) binding. Gly204 lines the NADPH pocket. The 1-deoxy-D-xylulose 5-phosphate site is built by Ser211, Asn216, Lys217, and Glu220. Mn(2+) is bound at residue Glu220.

This sequence belongs to the DXR family. It depends on Mg(2+) as a cofactor. Mn(2+) is required as a cofactor.

It carries out the reaction 2-C-methyl-D-erythritol 4-phosphate + NADP(+) = 1-deoxy-D-xylulose 5-phosphate + NADPH + H(+). Its pathway is isoprenoid biosynthesis; isopentenyl diphosphate biosynthesis via DXP pathway; isopentenyl diphosphate from 1-deoxy-D-xylulose 5-phosphate: step 1/6. Functionally, catalyzes the NADPH-dependent rearrangement and reduction of 1-deoxy-D-xylulose-5-phosphate (DXP) to 2-C-methyl-D-erythritol 4-phosphate (MEP). This is 1-deoxy-D-xylulose 5-phosphate reductoisomerase from Pelagibacter ubique (strain HTCC1062).